The chain runs to 498 residues: ATP synthase subunit beta, chloroplastic (498 aa).

172–179 is an ATP binding site; that stretch reads GGAGVGKT.

The protein belongs to the ATPase alpha/beta chains family. In terms of assembly, F-type ATPases have 2 components, CF(1) - the catalytic core - and CF(0) - the membrane proton channel. CF(1) has five subunits: alpha(3), beta(3), gamma(1), delta(1), epsilon(1). CF(0) has four main subunits: a(1), b(1), b'(1) and c(9-12).

It localises to the plastid. It is found in the chloroplast thylakoid membrane. The catalysed reaction is ATP + H2O + 4 H(+)(in) = ADP + phosphate + 5 H(+)(out). In terms of biological role, produces ATP from ADP in the presence of a proton gradient across the membrane. The catalytic sites are hosted primarily by the beta subunits. The sequence is that of ATP synthase subunit beta, chloroplastic from Eucalyptus globulus subsp. globulus (Tasmanian blue gum).